The sequence spans 331 residues: Glyceraldehyde-3-phosphate dehydrogenase, cytosolic (331 aa).

NAD(+) is bound by residues 11-12 (RI), Asp-33, and Arg-77. Residues 148 to 150 (SCT), Thr-179, 208 to 209 (TG), and Arg-231 contribute to the D-glyceraldehyde 3-phosphate site. Catalysis depends on Cys-149, which acts as the Nucleophile. An NAD(+)-binding site is contributed by Asn-313.

Belongs to the glyceraldehyde-3-phosphate dehydrogenase family. In terms of assembly, homotetramer.

The protein localises to the cytoplasm. It carries out the reaction D-glyceraldehyde 3-phosphate + phosphate + NAD(+) = (2R)-3-phospho-glyceroyl phosphate + NADH + H(+). Its pathway is carbohydrate degradation; glycolysis; pyruvate from D-glyceraldehyde 3-phosphate: step 1/5. In Leishmania mexicana, this protein is Glyceraldehyde-3-phosphate dehydrogenase, cytosolic (GAPC).